Consider the following 511-residue polypeptide: Arginine-containing cyclodipeptide synthase eshA (511 aa).

Positions Asp-413–Glu-417 match the Conserved DDXXE motif motif.

It belongs to the arginine-containing cyclodipeptide synthase family.

The enzyme catalyses L-arginyl-tRNA(Arg) + L-leucyl-tRNA(Leu) = cyclo(L-arginyl-L-leucyl) + tRNA(Arg) + tRNA(Leu) + 2 H(+). The protein operates within secondary metabolite biosynthesis. Arginine-containing cyclodipeptide synthase; part of the cluster that mediates the biosynthesis of a highly modified cyclo-arginine-leucine dipeptide (cRW). Within the pathway, eshA acts as the scaffold-generating enzyme and is responsible for formation of the cyclo-Arg-Leu diketopiperazine (cRL) from L-arginyl-tRNA(Arg) + L-Leucyl-tRNA(Leu). Additional enzymes from the cluster then further modify the cyclo-Arg-Leu diketopiperazine (cRW) scaffold. This Penicillium shearii (Eupenicillium shearii) protein is Arginine-containing cyclodipeptide synthase eshA.